Reading from the N-terminus, the 215-residue chain is Cytochrome b6 (215 aa).

A helical transmembrane segment spans residues Ile32–Phe52. Position 35 (Cys35) interacts with heme c. Heme b contacts are provided by His86 and His100. Transmembrane regions (helical) follow at residues Ala90–Phe110, Leu116–Tyr136, and Ala186–Ile206. Residues His187 and His202 each contribute to the heme b site.

It belongs to the cytochrome b family. PetB subfamily. The 4 large subunits of the cytochrome b6-f complex are cytochrome b6, subunit IV (17 kDa polypeptide, PetD), cytochrome f and the Rieske protein, while the 4 small subunits are PetG, PetL, PetM and PetN. The complex functions as a dimer. It depends on heme b as a cofactor. Requires heme c as cofactor.

It is found in the cellular thylakoid membrane. In terms of biological role, component of the cytochrome b6-f complex, which mediates electron transfer between photosystem II (PSII) and photosystem I (PSI), cyclic electron flow around PSI, and state transitions. The protein is Cytochrome b6 of Trichormus variabilis (strain ATCC 29413 / PCC 7937) (Anabaena variabilis).